The primary structure comprises 96 residues: Transcription and mRNA export factor SUS1 (96 aa).

The protein belongs to the ENY2 family. Component of the nuclear pore complex (NPC)-associated TREX-2 complex (transcription and export complex 2), composed of at least SUS1, SAC3, THP1, SEM1, and CDC31. TREX-2 contains 2 SUS1 chains. The TREX-2 complex interacts with the nucleoporin NUP1. Component of the 1.8 MDa SAGA transcription coactivator-HAT complex. SAGA is built of 5 distinct domains with specialized functions. Within the SAGA complex, SUS1, SGF11, SGF73 and UBP8 form an additional subcomplex of SAGA called the DUB module (deubiquitination module). Interacts directly with THP1, SAC3, SGF11, and with the RNA polymerase II.

The protein resides in the nucleus. It localises to the nucleoplasm. Its subcellular location is the cytoplasm. It is found in the P-body. Involved in mRNA export coupled transcription activation by association with both the TREX-2 and the SAGA complexes. At the promoters, SAGA is required for recruitment of the basal transcription machinery. It influences RNA polymerase II transcriptional activity through different activities such as TBP interaction and promoter selectivity, interaction with transcription activators, and chromatin modification through histone acetylation and deubiquitination. Within the SAGA complex, participates in a subcomplex required for deubiquitination of H2B and for the maintenance of steady-state H3 methylation levels. The TREX-2 complex functions in docking export-competent ribonucleoprotein particles (mRNPs) to the nuclear entrance of the nuclear pore complex (nuclear basket). TREX-2 participates in mRNA export and accurate chromatin positioning in the nucleus by tethering genes to the nuclear periphery. May also be involved in cytoplasmic mRNA decay by interaction with components of P-bodies. This is Transcription and mRNA export factor SUS1 from Kluyveromyces lactis (strain ATCC 8585 / CBS 2359 / DSM 70799 / NBRC 1267 / NRRL Y-1140 / WM37) (Yeast).